Consider the following 304-residue polypeptide: UDP-N-acetylenolpyruvoylglucosamine reductase (304 aa).

An FAD-binding PCMH-type domain is found at 33–212; that stretch reads MGGLADLFLI…KEMMDDLTHK (180 aa). Arg-176 is a catalytic residue. Ser-226 acts as the Proton donor in catalysis. The active site involves Glu-296.

Belongs to the MurB family. It depends on FAD as a cofactor.

It localises to the cytoplasm. The enzyme catalyses UDP-N-acetyl-alpha-D-muramate + NADP(+) = UDP-N-acetyl-3-O-(1-carboxyvinyl)-alpha-D-glucosamine + NADPH + H(+). The protein operates within cell wall biogenesis; peptidoglycan biosynthesis. Functionally, cell wall formation. This is UDP-N-acetylenolpyruvoylglucosamine reductase from Exiguobacterium sibiricum (strain DSM 17290 / CCUG 55495 / CIP 109462 / JCM 13490 / 255-15).